The sequence spans 447 residues: Tol-Pal system protein TolB (447 aa).

The N-terminal stretch at 1 to 34 (MSSRLPALPLSRRQALLGGAGSAAALLLPGGAQA) is a signal peptide. Residues 426 to 447 (RNEQKVPTPGFASDPAWSPLLS) are disordered.

The protein belongs to the TolB family. As to quaternary structure, the Tol-Pal system is composed of five core proteins: the inner membrane proteins TolA, TolQ and TolR, the periplasmic protein TolB and the outer membrane protein Pal. They form a network linking the inner and outer membranes and the peptidoglycan layer.

It localises to the periplasm. Its function is as follows. Part of the Tol-Pal system, which plays a role in outer membrane invagination during cell division and is important for maintaining outer membrane integrity. The polypeptide is Tol-Pal system protein TolB (Rhodopseudomonas palustris (strain BisB18)).